The primary structure comprises 481 residues: Protein hedgehog (481 aa).

Positions 1–19 are cleaved as a signal peptide; that stretch reads MDNQAVSALWSCASATCLS. Positions 20–90 are excised as a propeptide; the sequence is LDAKRHSIEP…LALNFRHAHS (71 aa). The tract at residues 26 to 56 is disordered; that stretch reads SIEPNPDGQASPDVNNNNNNHNKSTTTVDAH. Cys91 carries the N-palmitoyl cysteine lipid modification. Residues Glu155, Glu156, Asp161, Thr191, Glu192, Asp195, and Asp197 each coordinate Ca(2+). Gly264 carries the Cholesterol glycine ester lipid modification.

This sequence belongs to the hedgehog family. As to quaternary structure, interacts with shf. Post-translationally, the C-terminal part of the hedgehog protein precursor displays an autoproteolysis activity that results in the cleavage of the full-length protein into two parts (N-product and C-product). In addition, the C-terminal part displays a cholesterol transferase activity that results by the covalent attachment of a cholesterol moiety to the C-terminal of the newly generated N-product. The N-product is the active species in both local and long-range signaling, whereas the C-product has no signaling activity. In terms of processing, cholesterylation is required for N-product targeting to lipid rafts and multimerization. N-palmitoylation by Rasp of the hedgehog N-product, within the secretory pathway, is required for the embryonic and larval patterning activities of the hedgehog signal.

It is found in the nucleus. Its subcellular location is the cytoplasm. The protein resides in the cell membrane. The catalysed reaction is glycyl-L-cysteinyl-[protein] + cholesterol + H(+) = [protein]-C-terminal glycyl cholesterol ester + N-terminal L-cysteinyl-[protein]. In terms of biological role, the C-terminal part of the hedgehog protein precursor displays an autoproteolysis activity that results in the cleavage of the full-length protein into two parts (N-product and C-product). In addition, the C-terminal part displays a cholesterol transferase activity that results by the covalent attachment of a cholesterol moiety to the C-terminal of the newly generated N-product. Once cleaved, the C-product has no signaling activity and diffuses from the cell. The dually lipidated hedgehog protein N-product is a morphogen which is essential for a variety of patterning events during development. Establishes the anterior-posterior axis of the embryonic segments and patterns the larval imaginal disks. Binds to the patched (ptc) receptor, which functions in association with smoothened (smo), to activate the transcription of target genes wingless (wg), decapentaplegic (dpp) and ptc. In the absence of hh, ptc represses the constitutive signaling activity of smo through fused (fu). Essential component of a signaling pathway which regulates the Duox-dependent gut immune response to bacterial uracil; required to activate Cad99C-dependent endosome formation, norpA-dependent Ca2+ mobilization and p38 MAPK, which are essential steps in the Duox-dependent production of reactive oxygen species (ROS) in response to intestinal bacterial infection. During photoreceptor differentiation, it up-regulates transcription of Ubr3, which in turn promotes the hh-signaling pathway by mediating the ubiquitination and degradation of cos. The polypeptide is Protein hedgehog (Drosophila hydei (Fruit fly)).